The chain runs to 73 residues: MARITVEDCMERVSNRFLLVQMAIKRVKQFREGYEPLVPSKNKEIVTALREIAAAKVVPEDELSAAAAENRAE.

It belongs to the RNA polymerase subunit omega family. The RNAP catalytic core consists of 2 alpha, 1 beta, 1 beta' and 1 omega subunit. When a sigma factor is associated with the core the holoenzyme is formed, which can initiate transcription.

The enzyme catalyses RNA(n) + a ribonucleoside 5'-triphosphate = RNA(n+1) + diphosphate. Its function is as follows. Promotes RNA polymerase assembly. Latches the N- and C-terminal regions of the beta' subunit thereby facilitating its interaction with the beta and alpha subunits. In Oleidesulfovibrio alaskensis (strain ATCC BAA-1058 / DSM 17464 / G20) (Desulfovibrio alaskensis), this protein is DNA-directed RNA polymerase subunit omega.